A 138-amino-acid chain; its full sequence is MAALPDKEKLLRNFTRCANWEEKYLYIIELGQRLAELNPQDRNPQNTIHGCQSQVWIVMRRNANGIIELQGDSDAAIVKGLMAVVFILYHQMTAQDIVHFDVRPWFEKMALTQHLTPSRSQGLEAMIRAIRAKAATLS.

Catalysis depends on Cys51, which acts as the Cysteine persulfide intermediate.

It belongs to the SufE family. As to quaternary structure, homodimer. Interacts with SufS.

The protein resides in the cytoplasm. It functions in the pathway cofactor biosynthesis; iron-sulfur cluster biosynthesis. Its function is as follows. Participates in cysteine desulfuration mediated by SufS. Cysteine desulfuration mobilizes sulfur from L-cysteine to yield L-alanine and constitutes an essential step in sulfur metabolism for biosynthesis of a variety of sulfur-containing biomolecules. Functions as a sulfur acceptor for SufS, by mediating the direct transfer of the sulfur atom from the S-sulfanylcysteine of SufS, an intermediate product of cysteine desulfuration process. The chain is Cysteine desulfuration protein SufE from Salmonella agona (strain SL483).